The following is a 406-amino-acid chain: Succinylornithine transaminase (406 aa).

K252 carries the post-translational modification N6-(pyridoxal phosphate)lysine.

The protein belongs to the class-III pyridoxal-phosphate-dependent aminotransferase family. AstC subfamily. The cofactor is pyridoxal 5'-phosphate.

The catalysed reaction is N(2)-succinyl-L-ornithine + 2-oxoglutarate = N-succinyl-L-glutamate 5-semialdehyde + L-glutamate. It participates in amino-acid degradation; L-arginine degradation via AST pathway; L-glutamate and succinate from L-arginine: step 3/5. Its function is as follows. Catalyzes the transamination of N(2)-succinylornithine and alpha-ketoglutarate into N(2)-succinylglutamate semialdehyde and glutamate. Can also act as an acetylornithine aminotransferase. This Escherichia coli O45:K1 (strain S88 / ExPEC) protein is Succinylornithine transaminase.